The sequence spans 144 residues: Large ribosomal subunit protein uL16 (144 aa).

Positions 1–14 (MLMPKRVKYRKPHR) are enriched in basic residues. The interval 1–25 (MLMPKRVKYRKPHRPGTQGKATRGN) is disordered.

This sequence belongs to the universal ribosomal protein uL16 family. In terms of assembly, part of the 50S ribosomal subunit.

Functionally, binds 23S rRNA and is also seen to make contacts with the A and possibly P site tRNAs. The chain is Large ribosomal subunit protein uL16 from Moorella thermoacetica (strain ATCC 39073 / JCM 9320).